We begin with the raw amino-acid sequence, 434 residues long: MQVSVEATQGLERRLTISVPAEQIEKLVKDSLQREAKRARIPGFRPGKVPVTVINKRYGAAIRQDITGEVMQRNFIEAIIAEKLNPAGAPTFIPGSTDSEKFEFVATFEIYPEVELKGLDAIEVEQPKASVTDADVDSMIETLRKQHATYAAVEREAADGDKVKMNFVGSVDGEEFEGGKAEDFELQLGSGRMIPGFEAGILGHKAGEEFVIDVNFPEEYHAENLKGKAAKFAITLTEVQAANLPEVNDEFAALFGISEGGLEALKTEIRKNMNRELEQALKANVKEQVIAGLLANNDIELPKALIDGEVNVLRQQAMQRFGGQTANMPELPAELFTEQAARRVKIGLLLGEVIKTNELKAEDERVQGLIASMASAYEDPSEVIAYYNSNKELMQNMRNVALEEQAVEALLKSAKVTEKEVAFEEFMNKATGRA.

Positions 160-245 (GDKVKMNFVG…LTEVQAANLP (86 aa)) constitute a PPIase FKBP-type domain.

It belongs to the FKBP-type PPIase family. Tig subfamily.

It localises to the cytoplasm. The enzyme catalyses [protein]-peptidylproline (omega=180) = [protein]-peptidylproline (omega=0). Involved in protein export. Acts as a chaperone by maintaining the newly synthesized protein in an open conformation. Functions as a peptidyl-prolyl cis-trans isomerase. This Shewanella sp. (strain W3-18-1) protein is Trigger factor.